The sequence spans 47 residues: U18-ctenitoxin-Pn1a (47 aa).

Intrachain disulfides connect Cys-2-Cys-16, Cys-9-Cys-22, Cys-13-Cys-46, Cys-15-Cys-34, and Cys-24-Cys-32.

Expressed by the venom gland.

It is found in the secreted. In terms of biological role, neurotoxin. Causes spastic paralysis and death in mice by intracerebroventricular injection at dose levels of 3 ug per mouse. In Phoneutria nigriventer (Brazilian armed spider), this protein is U18-ctenitoxin-Pn1a.